The following is a 389-amino-acid chain: Chalcone synthase 9 (389 aa).

Cysteine 164 is an active-site residue.

This sequence belongs to the thiolase-like superfamily. Chalcone/stilbene synthases family.

It carries out the reaction (E)-4-coumaroyl-CoA + 3 malonyl-CoA + 3 H(+) = 2',4,4',6'-tetrahydroxychalcone + 3 CO2 + 4 CoA. Its pathway is secondary metabolite biosynthesis; flavonoid biosynthesis. The primary product of this enzyme is 4,2',4',6'-tetrahydroxychalcone (also termed naringenin-chalcone or chalcone) which can under specific conditions spontaneously isomerize into naringenin. In Daucus carota (Wild carrot), this protein is Chalcone synthase 9 (CHS9).